The following is a 211-amino-acid chain: Endonuclease YncB (211 aa).

The N-terminal stretch at 1 to 19 (MKKILISMIAIVLSITLAA) is a signal peptide. C20 carries N-palmitoyl cysteine lipidation. C20 is lipidated: S-diacylglycerol cysteine. The segment at 24-63 (HAAKNHSDSNGTEQVSQDTHSNEYNQTEQKAGTPHSKNQK) is disordered. The span at 31–53 (DSNGTEQVSQDTHSNEYNQTEQK) shows a compositional bias: polar residues. One can recognise a TNase-like domain in the interval 64-197 (KLVNVTLDRA…KSDKLSIWSK (134 aa)). Residue D77 participates in Ca(2+) binding. R91 is a catalytic residue. Residues D96 and T97 each contribute to the Ca(2+) site. Residues E99 and R142 contribute to the active site.

It belongs to the thermonuclease family. Requires Ca(2+) as cofactor.

The protein localises to the cell membrane. Its activity is regulated as follows. Inhibited by aurintricalboxylic acid but not by Zn(2+). In terms of biological role, shows DNase activity on double strand DNA. This chain is Endonuclease YncB (yncB), found in Bacillus subtilis (strain 168).